We begin with the raw amino-acid sequence, 272 residues long: uncharacterized protein (272 aa).

This is an uncharacterized protein from Sinorhizobium fredii (strain NBRC 101917 / NGR234).